A 393-amino-acid chain; its full sequence is Putative competence-damage inducible protein (393 aa).

This sequence belongs to the CinA family.

The protein is Putative competence-damage inducible protein of Streptococcus suis (strain 98HAH33).